A 257-amino-acid polypeptide reads, in one-letter code: Type III pantothenate kinase (257 aa).

Position 6–13 (Asp-6–Lys-13) interacts with ATP. Residue Gly-109–Arg-112 coordinates substrate. Asp-111 acts as the Proton acceptor in catalysis. Asp-132 provides a ligand contact to K(+). Residue Thr-135 participates in ATP binding. Thr-187 provides a ligand contact to substrate.

This sequence belongs to the type III pantothenate kinase family. In terms of assembly, homodimer. Requires NH4(+) as cofactor. The cofactor is K(+).

It is found in the cytoplasm. The catalysed reaction is (R)-pantothenate + ATP = (R)-4'-phosphopantothenate + ADP + H(+). Its pathway is cofactor biosynthesis; coenzyme A biosynthesis; CoA from (R)-pantothenate: step 1/5. In terms of biological role, catalyzes the phosphorylation of pantothenate (Pan), the first step in CoA biosynthesis. This chain is Type III pantothenate kinase, found in Anaplasma marginale (strain Florida).